Here is a 161-residue protein sequence, read N- to C-terminus: tRNA-acetylating toxin 1 (161 aa).

Acetyl-CoA-binding residues include leucine 92, valine 94, histidine 99, glycine 100, glycine 102, glycine 104, alanine 105, leucine 132, and glutamate 135. Tyrosine 140 is an active-site residue. Position 142 (histidine 142) interacts with acetyl-CoA.

The protein belongs to the acetyltransferase family. GNAT subfamily. In terms of assembly, homodimer (in absence of antitoxin). Forms a complex with cognate antitoxin TacA1. Forms a 4:2 antitoxin:toxin complex with cognate antitoxin TacA1.

It catalyses the reaction glycyl-tRNA(Gly) + acetyl-CoA = N-acetylglycyl-tRNA(Gly) + CoA + H(+). Functionally, toxic component of a type II toxin-antitoxin (TA) system. Acetylates tRNA and inhibits translation, does not acetylate uncharged tRNA. Upon expression in situ acetylates only Gly-tRNA(Gly). In vitro acetylates mainly Gly and Ile/Leu. Upon induction of the toxin gene in lag phase in rich medium (but not mid-exponential phase) the lag phase is extended by several hours, locking bacteria in a non-growth state. Neutralized only by cognate antitoxin TacA1 (A8), but not by TacA2 or TacA3. Its toxic effect is neutralized by expression of peptidyl-tRNA hydrolase (pth) in lag phase. NAD-dependent protein deacylase (cobB) also play a role in detoxifying TacT targets. Expression increases persister cell formation, which is also abolished by either cognate antitoxin or Pth expression. Plays a role in persister cell formation. In terms of biological role, the TacA1-TacT1 complex binds (and probably represses) its own promoter DNA but not that of tacA3-tacT3, it does not repress the tacA3-tacT3 promoter. The sequence is that of tRNA-acetylating toxin 1 from Salmonella typhimurium (strain 14028s / SGSC 2262).